We begin with the raw amino-acid sequence, 344 residues long: Acireductone dioxygenase (344 aa).

4 residues coordinate Fe(2+): His-92, His-94, Glu-98, and His-137. Positions 92, 94, 98, and 137 each coordinate Ni(2+).

The protein belongs to the acireductone dioxygenase (ARD) family. Fe(2+) is required as a cofactor. It depends on Ni(2+) as a cofactor.

The protein resides in the cytoplasm. Its subcellular location is the nucleus. It catalyses the reaction 1,2-dihydroxy-5-(methylsulfanyl)pent-1-en-3-one + O2 = 4-methylsulfanyl-2-oxobutanoate + formate + 2 H(+). The catalysed reaction is 1,2-dihydroxy-5-(methylsulfanyl)pent-1-en-3-one + O2 = 3-(methylsulfanyl)propanoate + CO + formate + 2 H(+). It functions in the pathway amino-acid biosynthesis; L-methionine biosynthesis via salvage pathway; L-methionine from S-methyl-5-thio-alpha-D-ribose 1-phosphate: step 5/6. Functionally, catalyzes 2 different reactions between oxygen and the acireductone 1,2-dihydroxy-3-keto-5-methylthiopentene (DHK-MTPene) depending upon the metal bound in the active site. Fe-containing acireductone dioxygenase (Fe-ARD) produces formate and 2-keto-4-methylthiobutyrate (KMTB), the alpha-ketoacid precursor of methionine in the methionine recycle pathway. Ni-containing acireductone dioxygenase (Ni-ARD) produces methylthiopropionate, carbon monoxide and formate, and does not lie on the methionine recycle pathway. In Leishmania infantum, this protein is Acireductone dioxygenase.